A 214-amino-acid polypeptide reads, in one-letter code: Probable maleylacetoacetate isomerase (214 aa).

In terms of domain architecture, GST N-terminal spans 4–84 (QKPVLYSYWR…YLEETHPDVP (81 aa)). Residues 14-19 (SSCSWR), valine 56, 68-69 (ES), glutamine 108, and 112-114 (NLK) each bind glutathione. A GST C-terminal domain is found at 89 to 212 (DPIKRAHARA…HPDNQPDTGL (124 aa)).

The protein belongs to the GST superfamily. Zeta family. It depends on glutathione as a cofactor.

It localises to the cytoplasm. The catalysed reaction is 4-maleylacetoacetate = 4-fumarylacetoacetate. It participates in amino-acid degradation; L-phenylalanine degradation; acetoacetate and fumarate from L-phenylalanine: step 5/6. The polypeptide is Probable maleylacetoacetate isomerase (gst-42) (Caenorhabditis elegans).